Reading from the N-terminus, the 138-residue chain is Nucleoside diphosphate kinase (138 aa).

Residues K10, F58, R86, T92, R103, and N113 each coordinate ATP. H116 serves as the catalytic Pros-phosphohistidine intermediate.

Belongs to the NDK family. Homotetramer. Requires Mg(2+) as cofactor.

The protein localises to the cytoplasm. The enzyme catalyses a 2'-deoxyribonucleoside 5'-diphosphate + ATP = a 2'-deoxyribonucleoside 5'-triphosphate + ADP. It catalyses the reaction a ribonucleoside 5'-diphosphate + ATP = a ribonucleoside 5'-triphosphate + ADP. Functionally, major role in the synthesis of nucleoside triphosphates other than ATP. The ATP gamma phosphate is transferred to the NDP beta phosphate via a ping-pong mechanism, using a phosphorylated active-site intermediate. The polypeptide is Nucleoside diphosphate kinase (Haemophilus ducreyi (strain 35000HP / ATCC 700724)).